The chain runs to 85 residues: Small integral membrane protein 35 (85 aa).

A helical transmembrane segment spans residues 7 to 27 (ISTLGMILGVGLSLLLVSILG).

It is found in the membrane. The sequence is that of Small integral membrane protein 35 from Mus musculus (Mouse).